We begin with the raw amino-acid sequence, 629 residues long: 1-deoxy-D-xylulose-5-phosphate synthase (629 aa).

Thiamine diphosphate contacts are provided by residues H72 and 113 to 115 (GHA). Residue D144 participates in Mg(2+) binding. Thiamine diphosphate contacts are provided by residues 145–146 (GA), N174, Y287, and E370. Residue N174 coordinates Mg(2+).

It belongs to the transketolase family. DXPS subfamily. As to quaternary structure, homodimer. It depends on Mg(2+) as a cofactor. Thiamine diphosphate is required as a cofactor.

The catalysed reaction is D-glyceraldehyde 3-phosphate + pyruvate + H(+) = 1-deoxy-D-xylulose 5-phosphate + CO2. It functions in the pathway metabolic intermediate biosynthesis; 1-deoxy-D-xylulose 5-phosphate biosynthesis; 1-deoxy-D-xylulose 5-phosphate from D-glyceraldehyde 3-phosphate and pyruvate: step 1/1. In terms of biological role, catalyzes the acyloin condensation reaction between C atoms 2 and 3 of pyruvate and glyceraldehyde 3-phosphate to yield 1-deoxy-D-xylulose-5-phosphate (DXP). This chain is 1-deoxy-D-xylulose-5-phosphate synthase, found in Prochlorococcus marinus (strain MIT 9301).